Here is a 448-residue protein sequence, read N- to C-terminus: 4-hydroxybenzoate transporter PcaK (448 aa).

Over 1 to 30 (MNSPSLPAVERLDVQAFINAQPLSPYQWRI) the chain is Cytoplasmic. Residues 31–51 (VLLCFLIVFLDGLDTAAMGFI) form a helical membrane-spanning segment. Over 52–67 (APALTQDWGIDRASLG) the chain is Periplasmic. Residues 68–88 (PVMSAALIGMVFGALGSGPLA) traverse the membrane as a helical segment. Over 89 to 94 (DRYGRK) the chain is Cytoplasmic. A helical membrane pass occupies residues 95–115 (LVLVAAVFLFGLFSLASAYST). Residues 116–119 (NVEQ) are Periplasmic-facing. Residues 120-140 (LLALRFLTGLGLGAAMPNATT) form a helical membrane-spanning segment. Topologically, residues 141–152 (LLSEYTPERLKS) are cytoplasmic. Residues 153-173 (LLVTSMFCGFNLGMACGGFVS) traverse the membrane as a helical segment. Over 174-184 (AKLIPLFGWHS) the chain is Periplasmic. A helical transmembrane segment spans residues 185-205 (LLLLGGLLPLVLAVVLLFRLP). Residues 206-261 (ESARYLVVRNRGSERVRQVLAPIAPAQVALARSFHVPEQQTVQARNVFAVIFSGTY) lie on the Cytoplasmic side of the membrane. The helical transmembrane segment at 262 to 282 (SAGTLLLWLTYFMGLVIVYLL) threads the bilayer. Residues 283–301 (TSWLPTLMRDSGASLEQAA) lie on the Periplasmic side of the membrane. A helical membrane pass occupies residues 302–322 (FIGALFQFGGVLSAVAVGWAM). Over 323 to 329 (DRFNPHK) the chain is Cytoplasmic. The chain crosses the membrane as a helical span at residues 330-350 (VIGLFYLLAGVFAWCVGQSLG). Position 351 (Q351) is a topological domain, periplasmic. Residues 352–372 (VTLLATLVLLAGMCINGAQSA) form a helical membrane-spanning segment. The Cytoplasmic portion of the chain corresponds to 373–398 (MPSLAARFYPTQGRATGVSWMLGIGR). Residues 399–419 (FGAILGAWIGATLLGLGWNFE) form a helical membrane-spanning segment. At 420 to 421 (QV) the chain is on the periplasmic side. The chain crosses the membrane as a helical span at residues 422 to 442 (LTALVLPAALATAAVLLKGLV). Over 443–448 (SHADAG) the chain is Cytoplasmic.

It belongs to the major facilitator superfamily. Aromatic acid:H(+) symporter (AAHS) (TC 2.A.1.15) family.

It is found in the cell inner membrane. Functionally, transports 4-hydroxybenzoate (4-HBA) and protocatechuate across the membrane. Driven by the proton motive force. Also functions as a chemoreceptor, which is required for chemotaxis to aromatic acids. This is 4-hydroxybenzoate transporter PcaK (pcaK) from Pseudomonas aeruginosa (strain ATCC 15692 / DSM 22644 / CIP 104116 / JCM 14847 / LMG 12228 / 1C / PRS 101 / PAO1).